We begin with the raw amino-acid sequence, 291 residues long: Probable xyloglucan endotransglucosylase/hydrolase protein 16 (291 aa).

Residues 1–24 form the signal peptide; sequence MGRILNRTVLMTLLVVTMAGTAFS. The 191-residue stretch at 25 to 215 folds into the GH16 domain; that stretch reads GSFNEEFDLT…WSKAPFTAYY (191 aa). The Nucleophile role is filled by E101. The active-site Proton donor is the E105. E105 contacts xyloglucan. A glycan (N-linked (GlcNAc...) asparagine) is linked at N109. Xyloglucan contacts are provided by residues 118-120, 128-130, 194-195, and G199; these read HTN, NRE, and DW. 2 disulfide bridges follow: C223/C232 and C272/C286. R277 provides a ligand contact to xyloglucan.

It belongs to the glycosyl hydrolase 16 family. XTH group 2 subfamily. Contains at least one intrachain disulfide bond essential for its enzymatic activity.

The protein localises to the secreted. It is found in the cell wall. Its subcellular location is the extracellular space. The protein resides in the apoplast. The catalysed reaction is breaks a beta-(1-&gt;4) bond in the backbone of a xyloglucan and transfers the xyloglucanyl segment on to O-4 of the non-reducing terminal glucose residue of an acceptor, which can be a xyloglucan or an oligosaccharide of xyloglucan.. Its function is as follows. Catalyzes xyloglucan endohydrolysis (XEH) and/or endotransglycosylation (XET). Cleaves and religates xyloglucan polymers, an essential constituent of the primary cell wall, and thereby participates in cell wall construction of growing tissues. The sequence is that of Probable xyloglucan endotransglucosylase/hydrolase protein 16 (XTH16) from Arabidopsis thaliana (Mouse-ear cress).